We begin with the raw amino-acid sequence, 228 residues long: Cytochrome P450 monooxygenase ataY (228 aa).

Cysteine 216 is a heme binding site.

It belongs to the cytochrome P450 family. Heme serves as cofactor.

The protein operates within mycotoxin biosynthesis. Functionally, cytochrome P450 monooxygenase; part of the gene cluster that mediates the biosynthesis of acetylaranotin, a member of the epipolythiodioxopiperazine (ETP) class of toxins characterized by a disulfide-bridged cyclic dipeptide. The first step of acetylaranotin biosynthesis is performed by the NRPS ataP which produces diketopiperazine cyclo-L-Phe-L-Phe via the condensation of 2 phenylalanines (L-Phe). The ataC domain of ataTC then catalyzes the formation of bishydroxylation of cyclo-L-Phe-L-Phe. The glutathione S-transferase domain ataG in ataIMG further catalyzes the conjugation of two glutathiones to the bishydroxylated intermediate. Next, the dipeptidase ataJ removes the Glu residues. The following step is performed by the carbon sulfur lyase domain ataI of ataIMG which may convert the bis-cysteinyl adduct to yield an epidithiol intermediate. The ataT domain from ataTC then catalyzes the oxidation of the free dithiols, followed by a cyclization step catalyzed by the cytochrome P450 ataF. AtaF probably acts as an epoxidase to promote a dual epoxidation formation at C8 and C9 along with C8' and C9', followed by the spontaneous nucleophilic attack of the amide nitrogens N10 and N10' to yield an intermediate with the pyrrolidine partial structure. The final steps of acetylaranotin biosynthesis involve the acetylation and ring rearrangement of an epitetrathiodiketopiperazine intermediate to produce acetylaranotin. AtaH probably catalyzes the acetylation of epitetrathiodiketopiperazine to produce a diacetate and ataY is responsible for the formation of the dihydrooxepin moiety that converts the diacetate intermediate to acetylaranotin via acetylapoaranotin. Both enzymes could function independently in the absence of the other. The acetylaranotin bis-thiomethyltransferase ataS located outside of acetylaranotin gene cluster is the main thiomethyltransferase responsible for converting acetylaranotin and its related intermediates to their methylated forms. The protein is Cytochrome P450 monooxygenase ataY of Aspergillus terreus (strain NIH 2624 / FGSC A1156).